A 397-amino-acid chain; its full sequence is Tryptophan synthase beta chain (397 aa).

An N6-(pyridoxal phosphate)lysine modification is found at Lys-87.

Belongs to the TrpB family. Tetramer of two alpha and two beta chains. Pyridoxal 5'-phosphate is required as a cofactor.

It carries out the reaction (1S,2R)-1-C-(indol-3-yl)glycerol 3-phosphate + L-serine = D-glyceraldehyde 3-phosphate + L-tryptophan + H2O. It participates in amino-acid biosynthesis; L-tryptophan biosynthesis; L-tryptophan from chorismate: step 5/5. Its function is as follows. The beta subunit is responsible for the synthesis of L-tryptophan from indole and L-serine. The polypeptide is Tryptophan synthase beta chain (Salmonella agona (strain SL483)).